The chain runs to 402 residues: Alanine racemase (402 aa).

Lysine 34 functions as the Proton acceptor; specific for D-alanine in the catalytic mechanism. N6-(pyridoxal phosphate)lysine is present on lysine 34. Arginine 133 contacts substrate. In terms of domain architecture, RPE1 insert spans 226–271; the sequence is EVSYNLSYKEKFERNTPALATTVCINKCADVNTRLTYKVPLKGSYR. Tyrosine 296 functions as the Proton acceptor; specific for L-alanine in the catalytic mechanism. Methionine 344 contacts substrate.

The protein belongs to the alanine racemase family. Requires pyridoxal 5'-phosphate as cofactor.

The enzyme catalyses L-alanine = D-alanine. It functions in the pathway amino-acid biosynthesis; D-alanine biosynthesis; D-alanine from L-alanine: step 1/1. In terms of biological role, catalyzes the interconversion of L-alanine and D-alanine. May also act on other amino acids. In Rickettsia typhi (strain ATCC VR-144 / Wilmington), this protein is Alanine racemase (alr).